We begin with the raw amino-acid sequence, 696 residues long: Elongation factor G (696 aa).

Residues 8–288 (EDYRNFGIMA…AVVDFLPSPI (281 aa)) form the tr-type G domain. Residues 17–24 (AHIDAGKT), 86–90 (DTPGH), and 140–143 (NKMD) contribute to the GTP site.

Belongs to the TRAFAC class translation factor GTPase superfamily. Classic translation factor GTPase family. EF-G/EF-2 subfamily.

Its subcellular location is the cytoplasm. Its function is as follows. Catalyzes the GTP-dependent ribosomal translocation step during translation elongation. During this step, the ribosome changes from the pre-translocational (PRE) to the post-translocational (POST) state as the newly formed A-site-bound peptidyl-tRNA and P-site-bound deacylated tRNA move to the P and E sites, respectively. Catalyzes the coordinated movement of the two tRNA molecules, the mRNA and conformational changes in the ribosome. The protein is Elongation factor G of Chelativorans sp. (strain BNC1).